Here is a 198-residue protein sequence, read N- to C-terminus: MAASLVGKKIVFVTGNAKKLEEVIQILGDKFPCTLVAQKIDLPEYQGEPDEISIQKCQEAARQVQGPVLVEDTCLCFNALGGLPGPYIKWFLQKLKPEGLYQLLAGFEDKSAYALCTFALSTGDPSQPVLLFRGKTPGQIVMPRGSRDFGWDPCFQPDGYEQTYAEMPKAEKNTISHRFRALFKLQEYFGVTDGAGDH.

Ala-2 carries the N-acetylalanine modification. Position 14–19 (14–19 (TGNAKK)) interacts with ITP. Mg(2+) is bound at residue Glu-44. Residues Lys-56, 72–73 (DT), and Lys-89 contribute to the ITP site. Ser-146 is modified (phosphoserine). ITP contacts are provided by residues 149–152 (FGWD), Lys-172, and 177–178 (HR).

The protein belongs to the HAM1 NTPase family. As to quaternary structure, homodimer. It depends on Mg(2+) as a cofactor. Mn(2+) is required as a cofactor.

It is found in the cytoplasm. It catalyses the reaction ITP + H2O = IMP + diphosphate + H(+). The enzyme catalyses dITP + H2O = dIMP + diphosphate + H(+). It carries out the reaction XTP + H2O = XMP + diphosphate + H(+). The catalysed reaction is N(6)-hydroxy-dATP + H2O = N(6)-hydroxy-dAMP + diphosphate + H(+). Functionally, pyrophosphatase that hydrolyzes the non-canonical purine nucleotides inosine triphosphate (ITP), deoxyinosine triphosphate (dITP) as well as 2'-deoxy-N-6-hydroxylaminopurine triphosphate (dHAPTP) and xanthosine 5'-triphosphate (XTP) to their respective monophosphate derivatives. The enzyme does not distinguish between the deoxy- and ribose forms. Probably excludes non-canonical purines from RNA and DNA precursor pools, thus preventing their incorporation into RNA and DNA and avoiding chromosomal lesions. This Rattus norvegicus (Rat) protein is Inosine triphosphate pyrophosphatase (Itpa).